The primary structure comprises 863 residues: Scm-like with four MBT domains protein 1 (863 aa).

MBT repeat units lie at residues 20 to 120, 128 to 232, 242 to 346, and 354 to 451; these read FSWE…LEAP, SDWN…LQPP, ADWQ…INPP, and FDWA…LSTP. Positions 638-773 are disordered; sequence KKKNKRIGRP…SDDENKPPSP (136 aa). The segment covering 660 to 679 has biased composition (basic residues); the sequence is KSSKRRKRRKNIFVHKKKRS. Positions 680–691 are enriched in polar residues; that stretch reads SASVDNTPVGSP. Acidic residues-rich tracts occupy residues 696–710 and 718–727; these read GEDEEDADDGDEDSL and QQEELQEESE. Over residues 734–744 the composition is skewed to low complexity; it reads SSSSPTQSETP. A phosphoserine mark is found at serine 764 and serine 772. Residues 793-861 enclose the SAM domain; sequence WSVADVVRFI…RIKFAFYEQF (69 aa).

As to quaternary structure, interacts with MYOD1. Component of the SLC (SFMBT1-LSD1-CoREST) corepressor complex, which also contains KDM1A/LSD1 and RCOR1/CoREST. Interacts with KDM1A/LSD1 and RCOR1/CoREST. Interacts with MYOD1. Interacts with L3MBTL3. Highly expressed in the testis, low expression is detected in brain, kidney, heart and lung. Highly expressed in germ cells, where it associates with the synaptic regions of meiotic chromosomes in pachytene stage spermatocytes.

Its subcellular location is the nucleus. Functionally, histone-binding protein, which is part of various corepressor complexes. Mediates the recruitment of corepressor complexes to target genes, followed by chromatin compaction and repression of transcription. Plays a role during myogenesis: required for the maintenance of undifferentiated states of myogenic progenitor cells via interaction with MYOD1. Interaction with MYOD1 leads to the recruitment of associated corepressors and silencing of MYOD1 target genes. Part of the SLC complex in germ cells, where it may play a role during spermatogenesis. The protein is Scm-like with four MBT domains protein 1 (Sfmbt1) of Mus musculus (Mouse).